A 266-amino-acid polypeptide reads, in one-letter code: Methionine aminopeptidase 1 (266 aa).

A substrate-binding site is contributed by His88. A divalent metal cation-binding residues include Asp106, Asp117, and His186. A substrate-binding site is contributed by His193. Residues Glu219 and Glu250 each contribute to the a divalent metal cation site.

It belongs to the peptidase M24A family. Methionine aminopeptidase type 1 subfamily. Monomer. Co(2+) is required as a cofactor. Zn(2+) serves as cofactor. It depends on Mn(2+) as a cofactor. Requires Fe(2+) as cofactor.

It carries out the reaction Release of N-terminal amino acids, preferentially methionine, from peptides and arylamides.. Functionally, removes the N-terminal methionine from nascent proteins. The N-terminal methionine is often cleaved when the second residue in the primary sequence is small and uncharged (Met-Ala-, Cys, Gly, Pro, Ser, Thr, or Val). Requires deformylation of the N(alpha)-formylated initiator methionine before it can be hydrolyzed. The protein is Methionine aminopeptidase 1 of Mycobacterium tuberculosis (strain CDC 1551 / Oshkosh).